The chain runs to 375 residues: Probable pectin lyase B (375 aa).

A signal peptide spans 1-19 (MKYAAFLPTIGALVSQAIA). 2 cysteine pairs are disulfide-bonded: C82/C101 and C91/C225. N-linked (GlcNAc...) asparagine glycosylation occurs at N128. R255 is a catalytic residue. C321 and C329 are disulfide-bonded.

It belongs to the polysaccharide lyase 1 family.

The protein localises to the secreted. It catalyses the reaction Eliminative cleavage of (1-&gt;4)-alpha-D-galacturonan methyl ester to give oligosaccharides with 4-deoxy-6-O-methyl-alpha-D-galact-4-enuronosyl groups at their non-reducing ends.. In terms of biological role, pectinolytic enzymes consist of four classes of enzymes: pectin lyase, polygalacturonase, pectin methylesterase and rhamnogalacturonase. Among pectinolytic enzymes, pectin lyase is the most important in depolymerization of pectin, since it cleaves internal glycosidic bonds of highly methylated pectins. This chain is Probable pectin lyase B (pelB), found in Aspergillus fumigatus (strain CBS 144.89 / FGSC A1163 / CEA10) (Neosartorya fumigata).